The sequence spans 62 residues: Mastoparan-AF (62 aa).

Residues 1 to 25 (MKNTILILFTAFIALLGFFGMSAEA) form the signal peptide. AXPX repeat units follow at residues 25–28 (ADPI), 29–32 (ADPI), 33–36 (ADPI), and 43–46 (ADPE). The propeptide occupies 26 to 47 (DPIADPIADPISGPNAEADPEA). Residue F61 is modified to Phenylalanine amide.

This sequence belongs to the MCD family. Mastoparan subfamily. As to expression, expressed by the venom gland.

Its subcellular location is the secreted. It is found in the target cell membrane. Functionally, antimicrobial and mast cell degranulating peptide. Has broad spectrum antibacterial activity against both Gram-positive and Gram-negative bacteria (S.aureus MIC=16-32 ug/ml, S.xylosus MIC=1.5 ug/ml, S.alactolyticus MIC=8 ug/ml, C.koseri MIC=4 ug/ml, E.coli MIC=4-32 ug/ml, K.pneumoniae MIC=32 ug/ml, P.aerugiosa MIC=96 ug/ml, S.choleraesuis MIC=16 ug/ml, S.typhimurium MIC=32 ug/ml, V.parahamelytics MIC=16 ug/ml). Is also active on multi-antibiotic resistant hemolytic E.coli O157:H7. Acts by affecting membrane permeability. On E.coli O157:H7, acts through multiple membrane disruption patterns, including large perforations (full opening) at apical ends (hollow tubes), vesicle budding, forming dents, and membrane corrugation and invagination leading to irregular pits or pores. Exerts 40% lower membrane permeabilization activities on E.coli O157:H7 than on the non-pathogen E.coli BL21. Shows little hemolytic activities on sheep, chicken and human erythrocytes, but with a higher activity on chicken erythrocytes. Its mast cell degranulation activity may be related to the activation of G-protein coupled receptors in mast cells as well as interaction with other proteins located in cell endosomal membranes in the mast cells. This chain is Mastoparan-AF, found in Vespa affinis (Lesser banded hornet).